A 549-amino-acid chain; its full sequence is Oxygen-dependent choline dehydrogenase (549 aa).

4–33 is a binding site for FAD; it reads DFVIIGSGSAGSAMAYRLSEDGRYSVIVIE. Histidine 465 (proton acceptor) is an active-site residue.

This sequence belongs to the GMC oxidoreductase family. FAD serves as cofactor.

It catalyses the reaction choline + A = betaine aldehyde + AH2. The catalysed reaction is betaine aldehyde + NAD(+) + H2O = glycine betaine + NADH + 2 H(+). The protein operates within amine and polyamine biosynthesis; betaine biosynthesis via choline pathway; betaine aldehyde from choline (cytochrome c reductase route): step 1/1. Involved in the biosynthesis of the osmoprotectant glycine betaine. Catalyzes the oxidation of choline to betaine aldehyde and betaine aldehyde to glycine betaine at the same rate. The polypeptide is Oxygen-dependent choline dehydrogenase (Brucella anthropi (strain ATCC 49188 / DSM 6882 / CCUG 24695 / JCM 21032 / LMG 3331 / NBRC 15819 / NCTC 12168 / Alc 37) (Ochrobactrum anthropi)).